The sequence spans 1035 residues: Teashirt homolog 2 (1035 aa).

Residues 1–92 are disordered; that stretch reads MPRRKQQAPK…ESLLSDASDQ (92 aa). Residues 13–42 adopt a coiled-coil conformation; sequence AGYAQEEQLKEEEEIKEEEEEEEDSGSVAQ. Positions 21–37 are enriched in acidic residues; the sequence is LKEEEEIKEEEEEEEDS. 2 stretches are compositionally biased toward polar residues: residues 39–49 and 66–92; these read SVAQLQGSNDP and SYQNSPGSHLSNQDAENESLLSDASDQ. K189 is covalently cross-linked (Glycyl lysine isopeptide (Lys-Gly) (interchain with G-Cter in SUMO2)). C2H2-type zinc fingers lie at residues 216-240 and 276-300; these read FRCRQCSAAYDTLVELTVHMNETGH and LKCMFCGDSFDSLQDLSVHMIKTKH. Residues 240 to 266 form a disordered region; sequence HYQDDNRKKDKLRPTSYSKPRKRAFQD. Residues K307 and K316 each participate in a glycyl lysine isopeptide (Lys-Gly) (interchain with G-Cter in SUMO2) cross-link. A C2H2-type 3; atypical zinc finger spans residues 381 to 405; that stretch reads LKCMECGSSHDTLQQLTTHMMVTGH. A Glycyl lysine isopeptide (Lys-Gly) (interchain with G-Cter in SUMO2) cross-link involves residue K418. Low complexity predominate over residues 432–450; that stretch reads SLSDAPSSDSLAPKPSSNS. The segment at 432–496 is disordered; the sequence is SLSDAPSSDS…DPLQKPLDPA (65 aa). Residues 460 to 483 show a composition bias toward basic and acidic residues; the sequence is ELKRESKKEKPEELRTDEKVLKSE. Glycyl lysine isopeptide (Lys-Gly) (interchain with G-Cter in SUMO2) cross-links involve residues K462, K481, K498, and K602. Disordered stretches follow at residues 600 to 674 and 764 to 791; these read QVKK…VEPV and QPIDLTKSKSKKAESSQAQSCTSPPQKH. Basic and acidic residues predominate over residues 601-669; that stretch reads VKKEPEDKEE…KDGGEKEKAQ (69 aa). Glycyl lysine isopeptide (Lys-Gly) (interchain with G-Cter in SUMO2) cross-links involve residues K801 and K821. A DNA-binding region (homeobox) is located at residues 842-912; the sequence is RKGRQSNWNP…NVKYQLRKTG (71 aa). A C2H2-type 4 zinc finger spans residues 927-949; the sequence is FYCSDCASQFRTPSTYISHLESH. Residues 968-977 are compositionally biased toward low complexity; sequence VEQEISRVSS. 2 disordered regions span residues 968-987 and 1015-1035; these read VEQEISRVSSAQRSPETIAG and SKTHSKSPEHHAQFVTDVDEE. S981 is subject to Phosphoserine. The C2H2-type 5 zinc-finger motif lies at 995–1018; it reads FKCKLCCRTFVSKHAVKLHLSKTH.

It belongs to the teashirt C2H2-type zinc-finger protein family. Interacts (via homeobox domain) with APBB1 (via PID domain 1). In terms of processing, sumoylated.

It localises to the nucleus. In terms of biological role, probable transcriptional regulator involved in developmental processes. May act as a transcriptional repressor (Potential). The sequence is that of Teashirt homolog 2 (TSHZ2) from Sus scrofa (Pig).